A 126-amino-acid polypeptide reads, in one-letter code: Large ribosomal subunit protein bL17 (126 aa).

It belongs to the bacterial ribosomal protein bL17 family. In terms of assembly, part of the 50S ribosomal subunit. Contacts protein L32.

The polypeptide is Large ribosomal subunit protein bL17 (Vibrio atlanticus (strain LGP32) (Vibrio splendidus (strain Mel32))).